A 101-amino-acid polypeptide reads, in one-letter code: Putative pterin-4-alpha-carbinolamine dehydratase (101 aa).

Belongs to the pterin-4-alpha-carbinolamine dehydratase family.

The catalysed reaction is (4aS,6R)-4a-hydroxy-L-erythro-5,6,7,8-tetrahydrobiopterin = (6R)-L-erythro-6,7-dihydrobiopterin + H2O. This is Putative pterin-4-alpha-carbinolamine dehydratase from Rhodopseudomonas palustris (strain HaA2).